A 123-amino-acid chain; its full sequence is Large ribosomal subunit protein bL12 (123 aa).

Belongs to the bacterial ribosomal protein bL12 family. In terms of assembly, homodimer. Part of the ribosomal stalk of the 50S ribosomal subunit. Forms a multimeric L10(L12)X complex, where L10 forms an elongated spine to which 2 to 4 L12 dimers bind in a sequential fashion. Binds GTP-bound translation factors.

In terms of biological role, forms part of the ribosomal stalk which helps the ribosome interact with GTP-bound translation factors. Is thus essential for accurate translation. This Mycoplasmopsis agalactiae (strain NCTC 10123 / CIP 59.7 / PG2) (Mycoplasma agalactiae) protein is Large ribosomal subunit protein bL12.